The following is a 166-amino-acid chain: UPF0254 protein Mevan_0254 (166 aa).

The protein belongs to the UPF0254 family.

This is UPF0254 protein Mevan_0254 from Methanococcus vannielii (strain ATCC 35089 / DSM 1224 / JCM 13029 / OCM 148 / SB).